A 211-amino-acid chain; its full sequence is Uridine kinase (211 aa).

Residue 15–22 (GGSGSGKT) participates in ATP binding.

It belongs to the uridine kinase family.

It localises to the cytoplasm. The enzyme catalyses uridine + ATP = UMP + ADP + H(+). It carries out the reaction cytidine + ATP = CMP + ADP + H(+). Its pathway is pyrimidine metabolism; CTP biosynthesis via salvage pathway; CTP from cytidine: step 1/3. It functions in the pathway pyrimidine metabolism; UMP biosynthesis via salvage pathway; UMP from uridine: step 1/1. This is Uridine kinase from Lactobacillus helveticus (strain DPC 4571).